The sequence spans 1728 residues: Lysophospholipase NTE1 (1728 aa).

At 1-44 (MDSSSIAHESDIVSTERNILPERFISNKQQGNYLEDGSGDGNGK) the chain is on the cytoplasmic side. A helical membrane pass occupies residues 45–65 (AAEHWLLAAIFNFFWVISYFI). At 66–97 (SGSTHIAFRSSWYIVSLLLLKFPKWIIVEANH) the chain is on the lumenal side. Residues 98–118 (IHLTIPFSVLVVTLAIIFYVS) form a helical membrane-spanning segment. Over 119 to 1728 (YEFLKGRLLS…GFFLHRRNSI (1610 aa)) the chain is Cytoplasmic. The segment covering 141-150 (SLNSKNSKSS) has biased composition (low complexity). 6 disordered regions span residues 141–167 (SLNS…RRRR), 285–368 (RKKK…DEST), 406–436 (NDNV…LSTS), 454–488 (TEAS…VTTP), 596–660 (NLQK…TGSR), and 687–756 (ASPS…FTSF). Residues 153–162 (LHHDSKDSNT) are compositionally biased toward basic and acidic residues. 2 stretches are compositionally biased toward polar residues: residues 293-303 (SRHGQYNNNSD) and 326-336 (MRSSSRNQNIP). Acidic residues predominate over residues 345–367 (SSDEESDINDGDSESQSESDDES). Composition is skewed to polar residues over residues 406–424 (NDNV…NYTN), 454–479 (TEAS…SKSI), and 599–609 (KGFQSPTSSRL). Positions 610–628 (TSNFNGNSNNQRTNSRNSQ) are enriched in low complexity. 2 stretches are compositionally biased toward polar residues: residues 642-657 (ELSQ…TPIT) and 729-756 (IYNN…FTSF). A nucleoside 3',5'-cyclic phosphate is bound by residues 854–987 (SPTL…LTSL) and 983–1121 (SLTS…VAKK). The segment at 1034–1055 (PELEENSTDYPNDGEEKDSSRD) is disordered. Over residues 1036-1049 (LEENSTDYPNDGEE) the composition is skewed to acidic residues. The PNPLA domain maps to 1422–1586 (LVLGGGGARG…VDNLPVLEMK (165 aa)). Positions 1426-1431 (GGGARG) match the GXGXXG motif. The short motif at 1453–1457 (GTSIG) is the GXSXG element. Serine 1455 functions as the Nucleophile in the catalytic mechanism. The active-site Proton acceptor is the aspartate 1573. Residues 1573–1575 (DGG) carry the DGA/G motif.

Belongs to the NTE family.

It localises to the endoplasmic reticulum membrane. The catalysed reaction is a 1-acyl-sn-glycero-3-phosphocholine + H2O = sn-glycerol 3-phosphocholine + a fatty acid + H(+). With respect to regulation, inhibited by organophosphorus esters. Functionally, intracellular phospholipase B that catalyzes the double deacylation of phosphatidylcholine (PC) to glycerophosphocholine (GroPCho). Plays an important role in membrane lipid homeostasis. Responsible for the rapid PC turnover in response to inositol, elevated temperatures, or when choline is present in the growth medium. In Candida glabrata (strain ATCC 2001 / BCRC 20586 / JCM 3761 / NBRC 0622 / NRRL Y-65 / CBS 138) (Yeast), this protein is Lysophospholipase NTE1 (NTE1).